The chain runs to 573 residues: Probable D-xylulose kinase A (573 aa).

His100, Arg171, Asp287, and Asn288 together coordinate substrate. ATP is bound by residues Trp368, 473–474 (GG), and Asn477.

This sequence belongs to the FGGY kinase family.

The protein localises to the cytoplasm. It catalyses the reaction D-xylulose + ATP = D-xylulose 5-phosphate + ADP + H(+). Functionally, highly specific D-xylulose kinase which participates in the catabolism of xylose. Xylose is a major component of hemicelluloses such as xylan. Most fungi utilize D-xylose via three enzymatic reactions, xylose reductase (XR), xylitol dehydrogenase (XDH), and xylulokinase, to form xylulose 5-phosphate, which enters pentose phosphate pathway. The chain is Probable D-xylulose kinase A (xkiA) from Aspergillus terreus (strain NIH 2624 / FGSC A1156).